A 293-amino-acid chain; its full sequence is Protease HtpX homolog (293 aa).

Transmembrane regions (helical) follow at residues 4 to 24 (VILF…TLRI) and 40 to 60 (ALLM…LLIS). Position 146 (His146) interacts with Zn(2+). Residue Glu147 is part of the active site. Position 150 (His150) interacts with Zn(2+). A run of 2 helical transmembrane segments spans residues 161-181 (LIQG…GYFV) and 198-218 (VTVI…VAWF). Residue Glu223 coordinates Zn(2+).

This sequence belongs to the peptidase M48B family. It depends on Zn(2+) as a cofactor.

The protein localises to the cell inner membrane. In Bordetella avium (strain 197N), this protein is Protease HtpX homolog.